The sequence spans 159 residues: S-ribosylhomocysteine lyase 1 (159 aa).

Fe cation contacts are provided by H54, H58, and C124.

This sequence belongs to the LuxS family. In terms of assembly, homodimer. The cofactor is Fe cation.

The catalysed reaction is S-(5-deoxy-D-ribos-5-yl)-L-homocysteine = (S)-4,5-dihydroxypentane-2,3-dione + L-homocysteine. Its function is as follows. Involved in the synthesis of autoinducer 2 (AI-2) which is secreted by bacteria and is used to communicate both the cell density and the metabolic potential of the environment. The regulation of gene expression in response to changes in cell density is called quorum sensing. Catalyzes the transformation of S-ribosylhomocysteine (RHC) to homocysteine (HC) and 4,5-dihydroxy-2,3-pentadione (DPD). This is S-ribosylhomocysteine lyase 1 from Lactobacillus delbrueckii subsp. bulgaricus (strain ATCC BAA-365 / Lb-18).